We begin with the raw amino-acid sequence, 477 residues long: Cysteine--tRNA ligase (477 aa).

Cysteine 34 provides a ligand contact to Zn(2+). Positions 36–46 (PTVYDFAHIGN) match the 'HIGH' region motif. The Zn(2+) site is built by cysteine 235, histidine 260, and glutamate 264. The 'KMSKS' region motif lies at 293–297 (KMSKS). Lysine 296 is an ATP binding site.

It belongs to the class-I aminoacyl-tRNA synthetase family. Monomer. Zn(2+) is required as a cofactor.

It is found in the cytoplasm. It carries out the reaction tRNA(Cys) + L-cysteine + ATP = L-cysteinyl-tRNA(Cys) + AMP + diphosphate. This Mesorhizobium japonicum (strain LMG 29417 / CECT 9101 / MAFF 303099) (Mesorhizobium loti (strain MAFF 303099)) protein is Cysteine--tRNA ligase.